Consider the following 366-residue polypeptide: Chorismate synthase (366 aa).

NADP(+) is bound by residues R48 and R54. FMN is bound by residues R132–S134, N244–A245, G289, K304–S308, and R330.

This sequence belongs to the chorismate synthase family. As to quaternary structure, homotetramer. Requires FMNH2 as cofactor.

The catalysed reaction is 5-O-(1-carboxyvinyl)-3-phosphoshikimate = chorismate + phosphate. It functions in the pathway metabolic intermediate biosynthesis; chorismate biosynthesis; chorismate from D-erythrose 4-phosphate and phosphoenolpyruvate: step 7/7. Catalyzes the anti-1,4-elimination of the C-3 phosphate and the C-6 proR hydrogen from 5-enolpyruvylshikimate-3-phosphate (EPSP) to yield chorismate, which is the branch point compound that serves as the starting substrate for the three terminal pathways of aromatic amino acid biosynthesis. This reaction introduces a second double bond into the aromatic ring system. This is Chorismate synthase from Methylobacterium radiotolerans (strain ATCC 27329 / DSM 1819 / JCM 2831 / NBRC 15690 / NCIMB 10815 / 0-1).